Consider the following 82-residue polypeptide: RNA-binding protein BPUM_0095 (82 aa).

This sequence belongs to the eukaryotic ribosomal protein eL8 family.

The polypeptide is RNA-binding protein BPUM_0095 (Bacillus pumilus (strain SAFR-032)).